The following is a 158-amino-acid chain: Ribonuclease H (158 aa).

The region spanning 9 to 155 is the RNase H type-1 domain; that stretch reads AFKPVELYTD…CDKLAVAAYQ (147 aa). Positions 18, 58, 80, and 147 each coordinate Mg(2+).

It belongs to the RNase H family. As to quaternary structure, monomer. Requires Mg(2+) as cofactor.

It localises to the cytoplasm. The catalysed reaction is Endonucleolytic cleavage to 5'-phosphomonoester.. Functionally, endonuclease that specifically degrades the RNA of RNA-DNA hybrids. The protein is Ribonuclease H of Rhodopirellula baltica (strain DSM 10527 / NCIMB 13988 / SH1).